A 203-amino-acid polypeptide reads, in one-letter code: Ribosomal RNA large subunit methyltransferase E (203 aa).

The S-adenosyl-L-methionine site is built by Gly-51, Trp-53, Asp-69, Asp-85, and Asp-108. Residue Lys-148 is the Proton acceptor of the active site.

Belongs to the class I-like SAM-binding methyltransferase superfamily. RNA methyltransferase RlmE family.

It is found in the cytoplasm. It carries out the reaction uridine(2552) in 23S rRNA + S-adenosyl-L-methionine = 2'-O-methyluridine(2552) in 23S rRNA + S-adenosyl-L-homocysteine + H(+). Its function is as follows. Specifically methylates the uridine in position 2552 of 23S rRNA at the 2'-O position of the ribose in the fully assembled 50S ribosomal subunit. This is Ribosomal RNA large subunit methyltransferase E from Methanosphaerula palustris (strain ATCC BAA-1556 / DSM 19958 / E1-9c).